Reading from the N-terminus, the 48-residue chain is Delta-stichotoxin-Hcr1a (48 aa).

3 disulfide bridges follow: C3–C43, C5–C33, and C26–C44. At K48 the chain carries Lysine amide; partial; in Delta-stichotoxin-Hcr1f.

The protein belongs to the sea anemone sodium channel inhibitory toxin family. Type II subfamily. In terms of assembly, probably composed of two peptide chains of 12 and 35 residues connected by two disulfide bonds (Cys-3-Cys-43 and Cys-5-Cys-33). Post-translationally, delta-SHTX-Hcr1f (RTX-VI) may be the result of post-translational modification of delta-SHTX-Hcr1a (RTX-III), which would consist of Arg-13 cleavage.

Its subcellular location is the secreted. The protein resides in the nematocyst. Binds to site 3 of voltage-gated sodium channels and inhibits the inactivation process. Specifically inhibits mammalian Nav1.3/SCN3A and Nav1.6/SCN8A sodium channels, as well as insect BgNav1 and VdNav1 sodium channels. Its function is as follows. Binds to site 3 of voltage-gated sodium channels and inhibits the inactivation process. Specifically inhibits mammalian Nav1.2/SCN3A (low inhibition) and Nav1.6/SCN8A sodium channels, as well as insect BgNav1 and VdNav1 sodium channels. This chain is Delta-stichotoxin-Hcr1a, found in Radianthus crispa (Leathery sea anemone).